A 1062-amino-acid polypeptide reads, in one-letter code: SLIT-ROBO Rho GTPase-activating protein 1 (1062 aa).

The 296-residue stretch at 19–314 (SQVKEIRAQL…AVDNLEPRSD (296 aa)) folds into the F-BAR domain. Residues 352 to 382 (QAELMLRNQQLQSRLATLKIESEEVKKTTEA) are a coiled coil. At serine 416 the chain carries Phosphoserine. The region spanning 481-671 (GRRNSHARHQ…TIIIHHETIF (191 aa)) is the Rho-GAP domain. An SH3 domain is found at 720–779 (CEPIEAIAKFDYVGRSARELSFKKGASLLLYHRASEDWWEGRHNGIDGLVPHQYIVVQDM). Positions 785–799 (DTLSQKADSEASSGP) are enriched in polar residues. The segment at 785–931 (DTLSQKADSE…TGFNDHKPLD (147 aa)) is disordered. 2 positions are modified to phosphoserine: serine 812 and serine 894. Over residues 899–908 (SRHDSLKKID) the composition is skewed to basic and acidic residues. Serine 909 carries the phosphoserine modification. Residues 914–923 (RSTSSGQYTG) are compositionally biased toward polar residues. Residues 933–960 (ETIAQDIEETMNTALNELRELERQSTVK) adopt a coiled-coil conformation. Positions 974–988 (KNSPTPATSTESLSP) are enriched in polar residues. Disordered stretches follow at residues 974-1013 (KNSP…ETMS) and 1028-1062 (KPPA…SCTM). Serine 976 bears the Phosphoserine mark. Residue threonine 978 is modified to Phosphothreonine. A compositionally biased stretch (low complexity) spans 1004 to 1013 (STSSSSETMS). At serine 1009 the chain carries Phosphoserine. Residues 1053 to 1062 (QGPTDKSCTM) are compositionally biased toward polar residues.

In terms of assembly, homodimer. Forms a heterooligomer with SRGAP2 and SRGAP3 through its F-BAR domain. Interacts with CDC42 and RHOA. Interacts with FASLG. Interacts (via SH3 domain) with ROBO1.

Functionally, GTPase-activating protein for RhoA and Cdc42 small GTPases. Together with CDC42 seems to be involved in the pathway mediating the repulsive signaling of Robo and Slit proteins in neuronal migration. SLIT2, probably through interaction with ROBO1, increases the interaction of SRGAP1 with ROBO1 and inactivates CDC42. The chain is SLIT-ROBO Rho GTPase-activating protein 1 (Srgap1) from Mus musculus (Mouse).